Consider the following 322-residue polypeptide: Formimidoylglutamase (322 aa).

His127, Asp163, His165, Asp167, Asp254, and Asp256 together coordinate Mn(2+).

This sequence belongs to the arginase family. Mn(2+) serves as cofactor.

The enzyme catalyses N-formimidoyl-L-glutamate + H2O = formamide + L-glutamate. The protein operates within amino-acid degradation; L-histidine degradation into L-glutamate; L-glutamate from N-formimidoyl-L-glutamate (hydrolase route): step 1/1. Catalyzes the conversion of N-formimidoyl-L-glutamate to L-glutamate and formamide. This Paraburkholderia xenovorans (strain LB400) protein is Formimidoylglutamase.